We begin with the raw amino-acid sequence, 82 residues long: UPF0298 protein SMU_1670c (82 aa).

It belongs to the UPF0298 family.

It is found in the cytoplasm. This is UPF0298 protein SMU_1670c from Streptococcus mutans serotype c (strain ATCC 700610 / UA159).